We begin with the raw amino-acid sequence, 474 residues long: tRNA-2-methylthio-N(6)-dimethylallyladenosine synthase (474 aa).

The 118-residue stretch at 3 to 120 folds into the MTTase N-terminal domain; that stretch reads QKLHIKTWGC…LPEMINQIRG (118 aa). [4Fe-4S] cluster is bound by residues Cys12, Cys49, Cys83, Cys157, Cys161, and Cys164. In terms of domain architecture, Radical SAM core spans 143–375; the sequence is RAEGPTAFVS…QQRINNQAAQ (233 aa). The region spanning 378–441 is the TRAM domain; the sequence is RAMLGTEQRV…TNSLRGEVVR (64 aa).

The protein belongs to the methylthiotransferase family. MiaB subfamily. As to quaternary structure, monomer. [4Fe-4S] cluster serves as cofactor.

The protein localises to the cytoplasm. The enzyme catalyses N(6)-dimethylallyladenosine(37) in tRNA + (sulfur carrier)-SH + AH2 + 2 S-adenosyl-L-methionine = 2-methylsulfanyl-N(6)-dimethylallyladenosine(37) in tRNA + (sulfur carrier)-H + 5'-deoxyadenosine + L-methionine + A + S-adenosyl-L-homocysteine + 2 H(+). In terms of biological role, catalyzes the methylthiolation of N6-(dimethylallyl)adenosine (i(6)A), leading to the formation of 2-methylthio-N6-(dimethylallyl)adenosine (ms(2)i(6)A) at position 37 in tRNAs that read codons beginning with uridine. The chain is tRNA-2-methylthio-N(6)-dimethylallyladenosine synthase from Histophilus somni (strain 129Pt) (Haemophilus somnus).